The sequence spans 306 residues: Follistatin-related protein 1 (306 aa).

Residues 1-18 form the signal peptide; that stretch reads MWKRWLALALVTIALVHG. The 24-residue stretch at 28–51 folds into the Follistatin-like domain; the sequence is ICANVFCGAGRECAVTEKGEPTCL. 5 cysteine pairs are disulfide-bonded: Cys-29-Cys-40, Cys-34-Cys-50, Cys-52-Cys-82, Cys-56-Cys-75, and Cys-64-Cys-96. In terms of domain architecture, Kazal-like spans 46 to 98; that stretch reads GEPTCLCIEQCKPHKRPVCGSNGKTYLNHCELHRDACLTGSKIQVDYDGHCKE. Asn-142 is a glycosylation site (N-linked (GlcNAc...) asparagine). In terms of domain architecture, EF-hand 1 spans 142–176; that stretch reads NYSEILDKYFKSFDNGDSHLDSSEFLKFVEQNETA. Ser-163 carries the post-translational modification Phosphoserine. 2 N-linked (GlcNAc...) asparagine glycosylation sites follow: Asn-173 and Asn-178. An EF-hand 2 domain is found at 191–226; it reads LRGLCVDALIELSDENADWKLSFQEFLKCLNPSFNP. Residues 231 to 285 form the VWFC domain; it reads CALEDETYADGAETEVDCNRCVCSCGHWVCTAMTCDGKNQKGVQTHTEEEMTRYA.

In terms of assembly, homodimer. Interacts with SCN10A. Interacts with DIP2A; DIP2A may act as a cell surface receptor for FSTL1. Interacts with BMP4. Interacts with CD14; this interaction promotes TL4-mediated signaling cascade.

The protein resides in the secreted. Secreted glycoprotein that is involved in various physiological processes, such as angiogenesis, regulation of the immune response, cell proliferation and differentiation. Plays a role in the development of the central nervous system, skeletal system, lungs, and ureter. Promotes endothelial cell survival, migration and differentiation into network structures in an AKT-dependent manner. Also promotes survival of cardiac myocytes. Initiates various signaling cascades by activating different receptors on the cell surface such as DIP2A, TLR4 or BMP receptors. The polypeptide is Follistatin-related protein 1 (Fstl1) (Rattus norvegicus (Rat)).